Here is a 379-residue protein sequence, read N- to C-terminus: Succinyl-diaminopimelate desuccinylase (379 aa).

His70 serves as a coordination point for Zn(2+). The active site involves Asp72. Zn(2+) is bound at residue Asp103. Catalysis depends on Glu137, which acts as the Proton acceptor. 3 residues coordinate Zn(2+): Glu138, Glu166, and His352.

This sequence belongs to the peptidase M20A family. DapE subfamily. As to quaternary structure, homodimer. Requires Zn(2+) as cofactor. It depends on Co(2+) as a cofactor.

It catalyses the reaction N-succinyl-(2S,6S)-2,6-diaminopimelate + H2O = (2S,6S)-2,6-diaminopimelate + succinate. It functions in the pathway amino-acid biosynthesis; L-lysine biosynthesis via DAP pathway; LL-2,6-diaminopimelate from (S)-tetrahydrodipicolinate (succinylase route): step 3/3. Functionally, catalyzes the hydrolysis of N-succinyl-L,L-diaminopimelic acid (SDAP), forming succinate and LL-2,6-diaminopimelate (DAP), an intermediate involved in the bacterial biosynthesis of lysine and meso-diaminopimelic acid, an essential component of bacterial cell walls. This chain is Succinyl-diaminopimelate desuccinylase, found in Burkholderia ambifaria (strain MC40-6).